A 101-amino-acid chain; its full sequence is Small ribosomal subunit protein uS14 (101 aa).

The disordered stretch occupies residues 49–70 (QSLPRDSSPSRQRNRCNQTGRP). The span at 52–68 (PRDSSPSRQRNRCNQTG) shows a compositional bias: polar residues.

Belongs to the universal ribosomal protein uS14 family. As to quaternary structure, part of the 30S ribosomal subunit. Contacts proteins S3 and S10.

In terms of biological role, binds 16S rRNA, required for the assembly of 30S particles and may also be responsible for determining the conformation of the 16S rRNA at the A site. This is Small ribosomal subunit protein uS14 from Yersinia pseudotuberculosis serotype O:1b (strain IP 31758).